The primary structure comprises 174 residues: Methylated-DNA--protein-cysteine methyltransferase (174 aa).

Catalysis depends on Cys-141, which acts as the Nucleophile; methyl group acceptor.

The protein belongs to the MGMT family.

Its subcellular location is the cytoplasm. It carries out the reaction a 6-O-methyl-2'-deoxyguanosine in DNA + L-cysteinyl-[protein] = S-methyl-L-cysteinyl-[protein] + a 2'-deoxyguanosine in DNA. It catalyses the reaction a 4-O-methyl-thymidine in DNA + L-cysteinyl-[protein] = a thymidine in DNA + S-methyl-L-cysteinyl-[protein]. Functionally, involved in the cellular defense against the biological effects of O6-methylguanine (O6-MeG) and O4-methylthymine (O4-MeT) in DNA. Repairs the methylated nucleobase in DNA by stoichiometrically transferring the methyl group to a cysteine residue in the enzyme. This is a suicide reaction: the enzyme is irreversibly inactivated. The polypeptide is Methylated-DNA--protein-cysteine methyltransferase (Thermococcus gammatolerans (strain DSM 15229 / JCM 11827 / EJ3)).